The primary structure comprises 104 residues: Thioredoxin-3 (104 aa).

In terms of domain architecture, Thioredoxin spans 2-104 (SKVIHVTSNE…TLRSTLEANI (103 aa)). Residues C31 and C34 each act as nucleophile in the active site. C31 and C34 are joined by a disulfide.

The protein belongs to the thioredoxin family.

In terms of biological role, participates in various redox reactions through the reversible oxidation of its active center dithiol to a disulfide and catalyzes dithiol-disulfide exchange reactions. The sequence is that of Thioredoxin-3 (trxC) from Dictyostelium discoideum (Social amoeba).